Consider the following 189-residue polypeptide: Protein GrpE (189 aa).

Residues 1–14 (MTEKNEEVVEDKNI) show a composition bias toward basic and acidic residues. The segment at 1–38 (MTEKNEEVVEDKNISDQTDENLTEEIESEADDLQVEPD) is disordered. A compositionally biased stretch (acidic residues) spans 17-35 (QTDENLTEEIESEADDLQV).

It belongs to the GrpE family. Homodimer.

It localises to the cytoplasm. Its function is as follows. Participates actively in the response to hyperosmotic and heat shock by preventing the aggregation of stress-denatured proteins, in association with DnaK and GrpE. It is the nucleotide exchange factor for DnaK and may function as a thermosensor. Unfolded proteins bind initially to DnaJ; upon interaction with the DnaJ-bound protein, DnaK hydrolyzes its bound ATP, resulting in the formation of a stable complex. GrpE releases ADP from DnaK; ATP binding to DnaK triggers the release of the substrate protein, thus completing the reaction cycle. Several rounds of ATP-dependent interactions between DnaJ, DnaK and GrpE are required for fully efficient folding. The protein is Protein GrpE of Leuconostoc mesenteroides subsp. mesenteroides (strain ATCC 8293 / DSM 20343 / BCRC 11652 / CCM 1803 / JCM 6124 / NCDO 523 / NBRC 100496 / NCIMB 8023 / NCTC 12954 / NRRL B-1118 / 37Y).